The primary structure comprises 269 residues: Trans-aconitate 2-methyltransferase (269 aa).

Belongs to the methyltransferase superfamily. Tam family.

The protein resides in the cytoplasm. It carries out the reaction trans-aconitate + S-adenosyl-L-methionine = (E)-3-(methoxycarbonyl)pent-2-enedioate + S-adenosyl-L-homocysteine. Catalyzes the S-adenosylmethionine monomethyl esterification of trans-aconitate. The protein is Trans-aconitate 2-methyltransferase of Streptomyces avermitilis (strain ATCC 31267 / DSM 46492 / JCM 5070 / NBRC 14893 / NCIMB 12804 / NRRL 8165 / MA-4680).